The sequence spans 328 residues: Putative P2Y purinoceptor 10 (328 aa).

The Extracellular segment spans residues 1–27 (MGSNSTSSAESNCNATYLPFQYSLYAT). Asparagine 4 and asparagine 14 each carry an N-linked (GlcNAc...) asparagine glycan. The chain crosses the membrane as a helical span at residues 28–48 (TYIFIFIPGLLANSAALWVLC). Residues 49–56 (RFISKKNK) are Cytoplasmic-facing. Residues 57-77 (AIIFMINLSVADLAHILSLPL) traverse the membrane as a helical segment. Topologically, residues 78–91 (RIYYYINRHWPFQR) are extracellular. Residues 92 to 112 (ALCLLCFYLKYLNMYASIFFL) traverse the membrane as a helical segment. Cysteine 94 and cysteine 170 form a disulfide bridge. Topologically, residues 113–137 (TCISLQRCLFLLKPFRARNWKRRYD) are cytoplasmic. The helical transmembrane segment at 138 to 158 (VGISAVIWIVVGTACLPFPIL) threads the bilayer. The Extracellular segment spans residues 159–182 (RNAGLANSTDSCFADLGYKQMDAV). A helical membrane pass occupies residues 183–203 (VLVTMVVIAELAGFVIPVITI). Topologically, residues 204 to 233 (ACCTWKTTVSLKHPPIAFQGISERKKALRM) are cytoplasmic. A helical transmembrane segment spans residues 234–254 (VFMCAAVFVICFTPYHINFIF). Topologically, residues 255-277 (YTMVKESIITSCPTVKSTLYFHP) are extracellular. A helical transmembrane segment spans residues 278–298 (FSLCLASLCCLLDPILYYFMA). The Cytoplasmic portion of the chain corresponds to 299–328 (SEFRDQLSRHGSSVTRSRLMSRESGSSMVN).

Belongs to the G-protein coupled receptor 1 family.

The protein resides in the cell membrane. Functionally, putative receptor for purines coupled to G-proteins. The polypeptide is Putative P2Y purinoceptor 10 (P2ry10) (Mus musculus (Mouse)).